The sequence spans 101 residues: NAD(P)H-quinone oxidoreductase subunit 4L, chloroplastic (101 aa).

3 helical membrane passes run 2 to 22, 32 to 52, and 61 to 81; these read MLEH…YGLI, MCLE…SDFF, and IFSI…PAIV.

This sequence belongs to the complex I subunit 4L family. In terms of assembly, NDH is composed of at least 16 different subunits, 5 of which are encoded in the nucleus.

Its subcellular location is the plastid. It is found in the chloroplast thylakoid membrane. It catalyses the reaction a plastoquinone + NADH + (n+1) H(+)(in) = a plastoquinol + NAD(+) + n H(+)(out). The catalysed reaction is a plastoquinone + NADPH + (n+1) H(+)(in) = a plastoquinol + NADP(+) + n H(+)(out). Its function is as follows. NDH shuttles electrons from NAD(P)H:plastoquinone, via FMN and iron-sulfur (Fe-S) centers, to quinones in the photosynthetic chain and possibly in a chloroplast respiratory chain. The immediate electron acceptor for the enzyme in this species is believed to be plastoquinone. Couples the redox reaction to proton translocation, and thus conserves the redox energy in a proton gradient. The polypeptide is NAD(P)H-quinone oxidoreductase subunit 4L, chloroplastic (Vitis vinifera (Grape)).